Reading from the N-terminus, the 1133-residue chain is MEIEFIQNLEKFCIGLQSNKSNERETSEQSILTLMKTPQPYKLCFNLLSKSNLTIAHFYGLLMIRDSAIREWAALDSQTKIMIIETLFQYIENMNSMNFLNYATKGQSFNTLGVIIKRSWLDNEKYEIGKGQMELNQIVMDRVYQYIDSGSPDRIEISIKIIGSLIIEFSSSSKAAHIQLSWEFHQKCLITFQNLHLQPIFRKVLELLQQFKDHIQQVPSRLTDQSFLQILYTSVKVFTDILDWRFLESGSSVLAYITSFSGGRTNLKPTIEWISLFTPSQSGGGISPIVSLVFGLYQLVEKVEKIPNLLRHAMSQLCGLQGPIIKDQKIKNQYLSEVLTFTNKLIEKSITTRNWNEMEDISNIIYKFCNTYKFSGIACLPNQIVIPFLQYTTQFVLSSLNLMKIWAKHGEEELEEEFENDCFDILLRSFVSLISDAEMLINRKRVDQLENFKEQYQVLKQCTSQIYQNYIQSRLELSEIEINKSNEELEPTCKSRGGIGGAEDEIDEDKKKYDEQLRSVAYIGRLNPGQSLELLKNEINRVINSLKERVSDPILFESLHWLLIFAGHLIFDAENKTPSAIPNAIEDYTFEQCKLTPASQVDGVIDLCNAVFRFHMEYENPLLNNGKMDTISPLVSQTSLWFTSGWSLVYLLPSSVFNVQISPKIIEAYGTEQPLLSITDYFINKILLNLKCWSGDLDVLKATSNLLNSFTLNKELCKYLIRSPNWSRLFFLEGISLLPPSVYGQLFKAFSRVVFSFPLSTRREYFIQLVKTLVEQMDGVLGRADFTKISQEAKIKENIYILLEKLNGIVSVSESEYVDDEDDCLFLTVDLFTKYATSLIAMIPLYDHCNDIVLLILRLFSNFTKHQLEYLNQDRARSIFPLIIQLFNSVATTSSHKKTLDSKEYYHRVRMMVKILTNIITFGDQRNNCPTIISETIFHAINIITPCLSNNDLLLYPKLARNYFMITSFLFGADNIQVKNIPVINTIYSLIEAGILHHDLEIVKSCFECIGCLTKSLENSKEKSGGLVDPHYQSVLIQFIGSVINFLLLQDFNVDELLSVASETLFSLMYSSPDGYRSKVIELITRQDPSIQSRVVQQFETLTIIGTDRKSKDLFMKNLQNFLVNVKSLINKK.

Belongs to the exportin family. As to quaternary structure, interacts with Ran and cargo proteins in a GTP-dependent manner.

It is found in the cytoplasm. The protein resides in the nucleus. In terms of biological role, mediates the nuclear export of proteins (cargos). In the nucleus binds cooperatively to its cargo and to the GTPase Ran in its active GTP-bound form. Docking of this trimeric complex to the nuclear pore complex (NPC) is mediated through binding to nucleoporins. Upon transit of a nuclear export complex into the cytoplasm, disassembling of the complex and hydrolysis of Ran-GTP to Ran-GDP cause release of the cargo from the export receptor. Xpo4 then return to the nuclear compartment and mediate another round of transport. The directionality of nuclear export is thought to be conferred by an asymmetric distribution of the GTP- and GDP-bound forms of Ran between the cytoplasm and nucleus. This chain is Exportin-4 (xpo4), found in Dictyostelium discoideum (Social amoeba).